Here is a 294-residue protein sequence, read N- to C-terminus: G-protein coupled receptor homolog U51 (294 aa).

The Extracellular portion of the chain corresponds to Met-1–Glu-14. Residues Ile-15–Val-35 form a helical membrane-spanning segment. The Cytoplasmic segment spans residues Lys-36–Thr-47. The helical transmembrane segment at Phe-48 to Leu-68 threads the bilayer. Over Thr-69–Cys-79 the chain is Extracellular. A helical membrane pass occupies residues Ile-80–Leu-102. The Cytoplasmic portion of the chain corresponds to Glu-103 to Lys-119. Residues Ile-120–Ile-140 form a helical membrane-spanning segment. At Ser-141 to Glu-166 the chain is on the extracellular side. A helical transmembrane segment spans residues Ala-167–Leu-187. Residues Asn-188 to Ser-200 are Cytoplasmic-facing. The helical transmembrane segment at Ile-201–Val-221 threads the bilayer. The Extracellular portion of the chain corresponds to Leu-222–Glu-236. A helical membrane pass occupies residues Leu-237 to Ser-257. At Cys-258 to Phe-294 the chain is on the cytoplasmic side.

Belongs to the G-protein coupled receptor 1 family.

It localises to the host cell membrane. The chain is G-protein coupled receptor homolog U51 (U51) from Human herpesvirus 7 (strain JI) (HHV-7).